Reading from the N-terminus, the 874-residue chain is S-layer protein (874 aa).

The signal sequence occupies residues 1–30; it reads MAKTNSYKKVIAGTMTAAMVAGVVSPVAAA. SLH domains lie at 31 to 93, 94 to 151, and 152 to 214; these read GKSF…NAQP, SFKD…KVDG, and TLVT…ENSD.

It localises to the secreted. It is found in the cell wall. Its subcellular location is the S-layer. In terms of biological role, the S-layer is a paracrystalline mono-layered assembly of proteins which coat the surface of bacteria. The protein is S-layer protein of Bacillus licheniformis.